Consider the following 522-residue polypeptide: MKLTLWTYEGPPHVGAMRVATGMTGLHYVLHAPQGDTYADLLFTMIERRGKRPPVSYTTFQARDLGSDTAEVFQQACRDAYERFQPQAIMVGASCTAELIQDDTGGLADALSLPVPVVHLELPSYQRKENFGADESFLQICRKLAKPTERTAQVSCNILGPTALGFRHRDDVTEITQLLNAMGIAVNVVAPMGSSPADIARLGAAHFNVLLYPETAESAARWAEKTLKQPYTKVVPIGVGATRDFIAEVAKLAGVEPKADESRLRQPWWSASVDSTYLTGKRVFLFGDATHVIAAARIARDEVGFEVVGMGCYNREYARPLRAAAKDYGLEALITDDYLEVEEAIQALAPELILGTQMERHIAKRLGIPCAVISAPVHVQDFPARYSPQMGFEGANVIFDTWIHPLTMGLEEHLLTMFREDFEFHDEAGPSHHGGKAVPASAPRAEATADEGSTPEEAVPPVAAEATSGEIVWLSDAEKELKKIPFFVRGKARRNTEKFAAEKGLTRISIETLYEAKAHYAR.

Position 36 (Asp36) interacts with [4Fe-4S] cluster. Asp274 serves as the catalytic Proton donor. 409–410 (GL) serves as a coordination point for substrate. The segment at 426–464 (DEAGPSHHGGKAVPASAPRAEATADEGSTPEEAVPPVAA) is disordered. Over residues 455–464 (PEEAVPPVAA) the composition is skewed to low complexity.

This sequence belongs to the ChlB/BchB/BchZ family. Protochlorophyllide reductase is composed of three subunits; BchL, BchN and BchB. Forms a heterotetramer of two BchB and two BchN subunits. It depends on [4Fe-4S] cluster as a cofactor.

The enzyme catalyses chlorophyllide a + oxidized 2[4Fe-4S]-[ferredoxin] + 2 ADP + 2 phosphate = protochlorophyllide a + reduced 2[4Fe-4S]-[ferredoxin] + 2 ATP + 2 H2O. Its pathway is porphyrin-containing compound metabolism; bacteriochlorophyll biosynthesis (light-independent). Component of the dark-operative protochlorophyllide reductase (DPOR) that uses Mg-ATP and reduced ferredoxin to reduce ring D of protochlorophyllide (Pchlide) to form chlorophyllide a (Chlide). This reaction is light-independent. The NB-protein (BchN-BchB) is the catalytic component of the complex. The chain is Light-independent protochlorophyllide reductase subunit B from Cereibacter sphaeroides (strain ATCC 17025 / ATH 2.4.3) (Rhodobacter sphaeroides).